A 105-amino-acid chain; its full sequence is Small ribosomal subunit protein eS25 (105 aa).

Belongs to the eukaryotic ribosomal protein eS25 family. As to quaternary structure, component of the small ribosomal subunit. Mature ribosomes consist of a small (40S) and a large (60S) subunit. The 40S subunit contains about 32 different proteins and 1 molecule of RNA (18S). The 60S subunit contains 45 different proteins and 3 molecules of RNA (25S, 5.8S and 5S).

The protein resides in the cytoplasm. Functionally, component of the ribosome, a large ribonucleoprotein complex responsible for the synthesis of proteins in the cell. The small ribosomal subunit (SSU) binds messenger RNAs (mRNAs) and translates the encoded message by selecting cognate aminoacyl-transfer RNA (tRNA) molecules. The large subunit (LSU) contains the ribosomal catalytic site termed the peptidyl transferase center (PTC), which catalyzes the formation of peptide bonds, thereby polymerizing the amino acids delivered by tRNAs into a polypeptide chain. The nascent polypeptides leave the ribosome through a tunnel in the LSU and interact with protein factors that function in enzymatic processing, targeting, and the membrane insertion of nascent chains at the exit of the ribosomal tunnel. The chain is Small ribosomal subunit protein eS25 (RPS25B) from Candida albicans (strain SC5314 / ATCC MYA-2876) (Yeast).